The following is a 167-amino-acid chain: Beta-3 adrenergic receptor (167 aa).

The Extracellular portion of the chain corresponds to 1-25 (RVGADAEAQECHSNPRCCSFASNMP). Cys11 and Cys17 are joined by a disulfide. The helical transmembrane segment at 26 to 47 (YALLSSSVSFYLPLLVMLFVYA) threads the bilayer. The Cytoplasmic segment spans residues 48–114 (RVFVVAKRQR…LPLREHRALR (67 aa)). Residues 66-97 (RFPPEESPRSPSRSPSPVAGGTGEAPDGVPSC) form a disordered region. A helical transmembrane segment spans residues 115 to 136 (TLGLIMGIFSLCWLPFFLANVL). Topologically, residues 137–148 (RALAGPSIVPNG) are extracellular. A helical transmembrane segment spans residues 149–167 (VFIALNWLGYANSAFNPLI).

It belongs to the G-protein coupled receptor 1 family. Adrenergic receptor subfamily. ADRB3 sub-subfamily. As to quaternary structure, interacts with ARRDC3.

It is found in the cell membrane. Functionally, beta-adrenergic receptors mediate the catecholamine-induced activation of adenylate cyclase through the action of G proteins. Beta-3 is involved in the regulation of lipolysis and thermogenesis. This chain is Beta-3 adrenergic receptor (ADRB3), found in Meriones unguiculatus (Mongolian jird).